Consider the following 380-residue polypeptide: N-acetylcysteine deacetylase (380 aa).

5 residues coordinate Ni(2+): Cys-98, His-100, Glu-134, His-158, and His-350.

This sequence belongs to the peptidase M20 family. The cofactor is a divalent metal cation.

The catalysed reaction is N-acetyl-L-cysteine + H2O = L-cysteine + acetate. It functions in the pathway amino-acid biosynthesis; L-cysteine biosynthesis. Functionally, probably catalyzes the deacetylation of N-acetylcysteine (NAC) to acetate and cysteine. Is involved in a S-(2-succino)cysteine (2SC) degradation pathway that allows B.subtilis to grow on 2SC as a sole sulfur source, via its metabolization to cysteine. This Bacillus subtilis (strain 168) protein is N-acetylcysteine deacetylase.